The following is a 140-amino-acid chain: Cysteine proteinase inhibitor 1 (140 aa).

The first 26 residues, 1–26, serve as a signal peptide directing secretion; sequence MRKYRVAGLVAALLVLHSLATPSAQA. Positions 48 to 135 constitute a Cystatin domain; that stretch reads GGVEPVGNEN…KELQEFKPVD (88 aa). The Secondary area of contact motif lies at 91–95; sequence QVVAG.

The protein belongs to the cystatin family. Phytocystatin subfamily.

The protein resides in the secreted. In terms of biological role, there are two distinct cystatins in rice seeds (Oryzacystatin-1 and -2) with different specificities against cysteine proteinases. May be involved in the control of germination by inhibition of endogenous cysteine proteinases. May play a role in defense by inhibiting exogenous proteases such as those present in digestive tracks of insects and nematodes. In Oryza sativa subsp. japonica (Rice), this protein is Cysteine proteinase inhibitor 1.